A 289-amino-acid polypeptide reads, in one-letter code: Mitochondrial fission regulator 1-like (289 aa).

Threonine 27 carries the phosphothreonine modification. Serine 38 is subject to Phosphoserine. Phosphoserine; by AMPK is present on serine 100. A phosphoserine mark is found at serine 107, serine 221, and serine 222. Residue serine 235 is modified to Phosphoserine; by AMPK. Phosphoserine is present on residues serine 258 and serine 270.

It belongs to the MTFR1 family. Phosphorylated by AMPK. Upon stress, phosphorylation at Ser-100 and Ser-235 by AMPK is sufficient to induce mitochondrial fragmentation.

The protein localises to the mitochondrion outer membrane. Mitochondrial protein required for adaptation of miochondrial dynamics to metabolic changes. Regulates mitochondrial morphology at steady state and mediates AMPK-dependent stress-induced mitochondrial fragmentation via the control of OPA1 levels. This is Mitochondrial fission regulator 1-like (Mtfr1l) from Mus musculus (Mouse).